The chain runs to 59 residues: Large ribosomal subunit protein uL30 (59 aa).

It belongs to the universal ribosomal protein uL30 family. In terms of assembly, part of the 50S ribosomal subunit.

This Stutzerimonas stutzeri (strain A1501) (Pseudomonas stutzeri) protein is Large ribosomal subunit protein uL30.